The chain runs to 290 residues: Fructose-1,6-bisphosphatase class 1 (290 aa).

Residues Glu78, Asp96, Leu98, and Asp99 each contribute to the Mg(2+) site. Substrate-binding positions include 99-102 (DGSS), Tyr201, and Lys226. Mg(2+) is bound at residue Glu232.

This sequence belongs to the FBPase class 1 family. As to quaternary structure, homotetramer. Requires Mg(2+) as cofactor.

The protein resides in the cytoplasm. The enzyme catalyses beta-D-fructose 1,6-bisphosphate + H2O = beta-D-fructose 6-phosphate + phosphate. It participates in carbohydrate biosynthesis; gluconeogenesis. The chain is Fructose-1,6-bisphosphatase class 1 from Helicobacter pylori (strain G27).